The sequence spans 300 residues: 33 kDa chaperonin (300 aa).

Intrachain disulfides connect C235/C237 and C269/C272.

This sequence belongs to the HSP33 family. Under oxidizing conditions two disulfide bonds are formed involving the reactive cysteines. Under reducing conditions zinc is bound to the reactive cysteines and the protein is inactive.

The protein localises to the cytoplasm. Functionally, redox regulated molecular chaperone. Protects both thermally unfolding and oxidatively damaged proteins from irreversible aggregation. Plays an important role in the bacterial defense system toward oxidative stress. The protein is 33 kDa chaperonin of Pseudomonas fluorescens (strain ATCC BAA-477 / NRRL B-23932 / Pf-5).